Here is a 250-residue protein sequence, read N- to C-terminus: Ubiquinone/menaquinone biosynthesis C-methyltransferase UbiE (250 aa).

Residues S73, D94, and N122–A123 each bind S-adenosyl-L-methionine.

It belongs to the class I-like SAM-binding methyltransferase superfamily. MenG/UbiE family.

The catalysed reaction is a 2-demethylmenaquinol + S-adenosyl-L-methionine = a menaquinol + S-adenosyl-L-homocysteine + H(+). The enzyme catalyses a 2-methoxy-6-(all-trans-polyprenyl)benzene-1,4-diol + S-adenosyl-L-methionine = a 5-methoxy-2-methyl-3-(all-trans-polyprenyl)benzene-1,4-diol + S-adenosyl-L-homocysteine + H(+). The protein operates within quinol/quinone metabolism; menaquinone biosynthesis; menaquinol from 1,4-dihydroxy-2-naphthoate: step 2/2. It participates in cofactor biosynthesis; ubiquinone biosynthesis. Functionally, methyltransferase required for the conversion of demethylmenaquinol (DMKH2) to menaquinol (MKH2) and the conversion of 2-polyprenyl-6-methoxy-1,4-benzoquinol (DDMQH2) to 2-polyprenyl-3-methyl-6-methoxy-1,4-benzoquinol (DMQH2). The polypeptide is Ubiquinone/menaquinone biosynthesis C-methyltransferase UbiE (Legionella pneumophila (strain Paris)).